The primary structure comprises 431 residues: Histidine--tRNA ligase (431 aa).

This sequence belongs to the class-II aminoacyl-tRNA synthetase family. As to quaternary structure, homodimer.

It localises to the cytoplasm. It catalyses the reaction tRNA(His) + L-histidine + ATP = L-histidyl-tRNA(His) + AMP + diphosphate + H(+). The sequence is that of Histidine--tRNA ligase from Neisseria gonorrhoeae (strain ATCC 700825 / FA 1090).